A 394-amino-acid chain; its full sequence is MALLDLALEGMAVFGFVLFLVLWLMHFMAIIYTRLHLNKKATDKQPYSKLPGVSLLKPLKGVDPNLINNLETFFELDYPKYEVLLCVQDHDDPAIDVCKKLLGKYPNVDARLFIGGKKVGINPKINNLMPGYEVAKYDLIWICDSGIRVIPDTLTDMVNQMTEKVGLVHGLPYVADRQGFAATLEQVYFGTSHPRYYISANVTGFKCVTGMSCLMRKDVLDQAGGLIAFAQYIAEDYFMAKAIADRGWRFAMSTQVAMQNSGSYSISQFQSRMIRWTKLRINMLPATIICEPISECFVASLIIGWAAHHVFRWDIMVFFMCHCLAWFIFDYIQLRGVQGGTLCFSKLDYAVAWFIRESMTIYIFLSALWDPTISWRTGRYRLRCGGTAEEILDV.

Topologically, residues 1-10 (MALLDLALEG) are lumenal. Residues 11–32 (MAVFGFVLFLVLWLMHFMAIIY) traverse the membrane as a helical segment. Residues 33–195 (TRLHLNKKAT…QVYFGTSHPR (163 aa)) lie on the Cytoplasmic side of the membrane. A short sequence motif (D1) is located at residue D92. An N6-acetyllysine modification is found at K117. A short sequence motif (D2) is located at residue D144. The chain crosses the membrane as a helical span at residues 196 to 215 (YYISANVTGFKCVTGMSCLM). At 216–287 (RKDVLDQAGG…KLRINMLPAT (72 aa)) the chain is on the lumenal side. D236 is a short sequence motif (D3). D236 (proton acceptor) is an active-site residue. The short motif at 272–276 (RMIRW) is the (Q/R)XXRW element. A helical membrane pass occupies residues 288-304 (IICEPISECFVASLIIG). At 305–309 (WAAHH) the chain is on the cytoplasmic side. A helical transmembrane segment spans residues 310–328 (VFRWDIMVFFMCHCLAWFI). The Lumenal portion of the chain corresponds to 329–348 (FDYIQLRGVQGGTLCFSKLD). The chain crosses the membrane as a helical span at residues 349–369 (YAVAWFIRESMTIYIFLSALW). Over 370–394 (DPTISWRTGRYRLRCGGTAEEILDV) the chain is Cytoplasmic.

This sequence belongs to the glycosyltransferase 2 family. As to quaternary structure, interacts with RTN1; regulates the ceramide glucosyltransferase activity of UGCG. As to expression, found in all tissues examined.

The protein localises to the golgi apparatus membrane. The enzyme catalyses an N-acylsphing-4-enine + UDP-alpha-D-glucose = a beta-D-glucosyl-(1&lt;-&gt;1')-N-acylsphing-4-enine + UDP + H(+). The catalysed reaction is UDP-alpha-D-xylose + an N-acylsphing-4-enine = a beta-D-xylosyl-(1&lt;-&gt;1')-N-acylsphing-4-enine + UDP + H(+). It carries out the reaction N-(9Z-octadecenoyl)-sphing-4-enine + UDP-alpha-D-xylose = beta-D-xylosyl-(1&lt;-&gt;1')-N-(9Z-octadecenoyl)-sphing-4-enine + UDP + H(+). The protein operates within lipid metabolism; sphingolipid metabolism. Participates in the initial step of the glucosylceramide-based glycosphingolipid/GSL synthetic pathway at the cytosolic surface of the Golgi. Catalyzes the transfer of glucose from UDP-glucose to ceramide to produce glucosylceramide/GlcCer (such as beta-D-glucosyl-(1&lt;-&gt;1')-N-acylsphing-4-enine). GlcCer is the core component of glycosphingolipids/GSLs, amphipathic molecules consisting of a ceramide lipid moiety embedded in the outer leaflet of the membrane, linked to one of hundreds of different externally oriented oligosaccharide structures. Glycosphingolipids are essential components of membrane microdomains that mediate membrane trafficking and signal transduction, implicated in many fundamental cellular processes, including growth, differentiation, migration, morphogenesis, cell-to-cell and cell-to-matrix interactions. They are required for instance in the proper development and functioning of the nervous system. As an example of their role in signal transduction, they regulate the leptin receptor/LEPR in the leptin-mediated signaling pathway. They also play an important role in the establishment of the skin barrier regulating keratinocyte differentiation and the proper assembly of the cornified envelope. The biosynthesis of GSLs is also required for the proper intestinal endocytic uptake of nutritional lipids. Catalyzes the synthesis of xylosylceramide/XylCer (such as beta-D-xylosyl-(1&lt;-&gt;1')-N-acylsphing-4-enine) using UDP-Xyl as xylose donor. This Homo sapiens (Human) protein is Ceramide glucosyltransferase.